Reading from the N-terminus, the 1338-residue chain is Protein dispatched homolog 3 (1338 aa).

At 1–67 (MDTEDDPLLQ…VGWIFTNPYC (67 aa)) the chain is on the cytoplasmic side. A helical transmembrane segment spans residues 68-88 (AGFILFLGCAIPAVLAVVMFL). Residues 89 to 406 (HYPALDIDIS…YEVRRTFNND (318 aa)) are Lumenal-facing. The interval 164 to 196 (TRAKRSAPQGRTSSPEPRAHPHPGNETSRVTRG) is disordered. Residues 401 to 559 (RTFNNDMLLA…LFTMPAALGI (159 aa)) form the SSD domain. Residues 407-427 (MLLAFISSSCIAVLVYILTSC) traverse the membrane as a helical segment. Residue serine 428 is a topological domain, cytoplasmic. The helical transmembrane segment at 429 to 449 (VFLSFFGIASIGLSCLVALFL) threads the bilayer. Topologically, residues 450–452 (YHV) are lumenal. A helical membrane pass occupies residues 453-473 (VFGIQYLGILNGVAAFVIVGI). Over 474–517 (GVDDVFVFINTYRQATHLKDLRLRMIHTIQTAGKATFFTSLTTA) the chain is Cytoplasmic. A helical membrane pass occupies residues 518–538 (AAYAANIFSQIPAVHDFGLFM). Residue serine 539 is a topological domain, lumenal. Residues 540 to 560 (LIVSCCWVAVLFTMPAALGIW) traverse the membrane as a helical segment. Residues 561-672 (TLYVSPLESS…WVLWSAVKSR (112 aa)) are Cytoplasmic-facing. Residues 673–693 (WVIVGLFLLVLLLSIFFASRL) traverse the membrane as a helical segment. Residues 694–1128 (RPASRAPVLF…IFMEIIGVQS (435 aa)) are Lumenal-facing. Residues 747 to 768 (SLEKKKRGSASPWGSKGSISDT) are disordered. A helical membrane pass occupies residues 1129 to 1149 (ALYGLILSLVICVAAVAVFTT). Residue histidine 1150 is a topological domain, cytoplasmic. Residues 1151–1171 (ILLLLPVLLSILGVVCLVVTI) form a helical membrane-spanning segment. Residues 1172–1237 (MYWSGWEMGA…TIEAIRHVGV (66 aa)) are Lumenal-facing. A helical transmembrane segment spans residues 1238–1258 (AIVSSAVTTVIATVPLFFCII). Topologically, residues 1259–1266 (APFAKFGK) are cytoplasmic. Residues 1267 to 1287 (IVALNTGVSILYTLTVSTALL) traverse the membrane as a helical segment. Residues 1288–1302 (SIMGPGTFTRSRTSC) are Lumenal-facing. A helical transmembrane segment spans residues 1303 to 1323 (LKAVAGVLLAGLLGLCICLAL). The Cytoplasmic portion of the chain corresponds to 1324–1338 (LKGGFKIPLPNGTAL).

Belongs to the patched family. As to expression, expressed in retina, hippocampus and cerebellum. Expressed in the ganglion and bipolar cells of the inner and outer nuclear layers of the retina and in Purkinje cells (at protein level). Expressed strongly in brain and retina, weakly in testis and bone marrow.

Its subcellular location is the endoplasmic reticulum membrane. It localises to the nucleus membrane. The protein resides in the cytoplasmic vesicle membrane. Functionally, plays a role in neuronal proliferation and differentiation. Plays a role in the accumulation of cellular cholesterol. Involved in intracellular lipid droplet formation. May contribute to cholesterol homeostasis in neuronal cells. The protein is Protein dispatched homolog 3 of Gallus gallus (Chicken).